The following is a 190-amino-acid chain: Xanthine phosphoribosyltransferase (190 aa).

Xanthine-binding residues include L20 and N27. 128 to 132 is a 5-phospho-alpha-D-ribose 1-diphosphate binding site; the sequence is ANGEA. A xanthine-binding site is contributed by K156.

This sequence belongs to the purine/pyrimidine phosphoribosyltransferase family. Xpt subfamily. Homodimer.

It localises to the cytoplasm. The enzyme catalyses XMP + diphosphate = xanthine + 5-phospho-alpha-D-ribose 1-diphosphate. Its pathway is purine metabolism; XMP biosynthesis via salvage pathway; XMP from xanthine: step 1/1. In terms of biological role, converts the preformed base xanthine, a product of nucleic acid breakdown, to xanthosine 5'-monophosphate (XMP), so it can be reused for RNA or DNA synthesis. The protein is Xanthine phosphoribosyltransferase of Clostridium botulinum (strain Eklund 17B / Type B).